The primary structure comprises 298 residues: Apolipoprotein E (298 aa).

Residues 1–18 (MKVLWAALVVTLLAGCQA) form the signal peptide. Tandem repeats lie at residues 74-95 (LLME…QELA), 96-117 (PMAE…SRLR), 118-139 (ADME…TMMG), 140-161 (QSGE…KRLL), 162-183 (RDVE…EGAE), and 223-244 (GRLE…EQME). The segment at 74 to 244 (LLMEDTMKEV…RLEEVREQME (171 aa)) is 8 X 22 AA approximate tandem repeats. M137 is subject to Methionine sulfoxide. At S141 the chain carries Phosphoserine. The LDL and other lipoprotein receptors binding stretch occupies residues 152 to 162 (HLRKLRKRLLR). 156 to 159 (LRKR) lines the heparin pocket. The lipid-binding and lipoprotein association stretch occupies residues 204-272 (SLPSQPLRER…SWFEPMMEDM (69 aa)). Residue 218–225 (GEQMRGRL) participates in heparin binding. The specificity for association with VLDL stretch occupies residues 260–272 (RFKSWFEPMMEDM).

The protein belongs to the apolipoprotein A1/A4/E family. As to quaternary structure, homotetramer. May interact with ABCA1; functionally associated with ABCA1 in the biogenesis of HDLs. May interact with APP/A4 amyloid-beta peptide; the interaction is extremely stable in vitro but its physiological significance is unclear. May interact with MAPT. May interact with MAP2. In the cerebrospinal fluid, interacts with secreted SORL1. Interacts with PMEL; this allows the loading of PMEL luminal fragment on ILVs to induce fibril nucleation. Post-translationally, APOE exists as multiple glycosylated and sialylated glycoforms within cells and in plasma. The extent of glycosylation and sialylation are tissue and context specific. In terms of processing, glycated in plasma VLDL. Phosphorylated by FAM20C in the extracellular medium.

Its subcellular location is the secreted. The protein resides in the extracellular space. It localises to the extracellular matrix. It is found in the extracellular vesicle. The protein localises to the endosome. Its subcellular location is the multivesicular body. Functionally, APOE is an apolipoprotein, a protein associating with lipid particles, that mainly functions in lipoprotein-mediated lipid transport between organs via the plasma and interstitial fluids. APOE is a core component of plasma lipoproteins and is involved in their production, conversion and clearance. Apolipoproteins are amphipathic molecules that interact both with lipids of the lipoprotein particle core and the aqueous environment of the plasma. As such, APOE associates with chylomicrons, chylomicron remnants, very low density lipoproteins (VLDL) and intermediate density lipoproteins (IDL) but shows a preferential binding to high-density lipoproteins (HDL). It also binds a wide range of cellular receptors including the LDL receptor/LDLR, the LDL receptor-related proteins LRP1, LRP2 and LRP8 and the very low-density lipoprotein receptor/VLDLR that mediate the cellular uptake of the APOE-containing lipoprotein particles. Finally, APOE also has a heparin-binding activity and binds heparan-sulfate proteoglycans on the surface of cells, a property that supports the capture and the receptor-mediated uptake of APOE-containing lipoproteins by cells. A main function of APOE is to mediate lipoprotein clearance through the uptake of chylomicrons, VLDLs, and HDLs by hepatocytes. APOE is also involved in the biosynthesis by the liver of VLDLs as well as their uptake by peripheral tissues ensuring the delivery of triglycerides and energy storage in muscle, heart and adipose tissues. By participating in the lipoprotein-mediated distribution of lipids among tissues, APOE plays a critical role in plasma and tissues lipid homeostasis. APOE is also involved in two steps of reverse cholesterol transport, the HDLs-mediated transport of cholesterol from peripheral tissues to the liver, and thereby plays an important role in cholesterol homeostasis. First, it is functionally associated with ABCA1 in the biogenesis of HDLs in tissues. Second, it is enriched in circulating HDLs and mediates their uptake by hepatocytes. APOE also plays an important role in lipid transport in the central nervous system, regulating neuron survival and sprouting. The polypeptide is Apolipoprotein E (APOE) (Dasyprocta punctata (Central American agouti)).